The primary structure comprises 208 residues: Small ribosomal subunit protein uS4 (208 aa).

Residues 98–159 (LRLDNVVFRL…RSKKVVRITE (62 aa)) enclose the S4 RNA-binding domain.

This sequence belongs to the universal ribosomal protein uS4 family. In terms of assembly, part of the 30S ribosomal subunit. Contacts protein S5. The interaction surface between S4 and S5 is involved in control of translational fidelity.

Its function is as follows. One of the primary rRNA binding proteins, it binds directly to 16S rRNA where it nucleates assembly of the body of the 30S subunit. Functionally, with S5 and S12 plays an important role in translational accuracy. The sequence is that of Small ribosomal subunit protein uS4 from Anaeromyxobacter dehalogenans (strain 2CP-1 / ATCC BAA-258).